The sequence spans 726 residues: MAQTVQNVTLSLTLPITCHICLGKVRQPVICINNHVFCSICIDLWLKNNSQCPACRVPITPENPCKEIIGGTSESEPMLSHTVRKHLRKTRLELLHKEYEDEIDCLQKEVEELKSKNLSLESQIKTILDPLTLVQGNQNEDKHLVTDNPSKINPETVAEWKKKLRTANEIYEKVKDDVDKLKEANKKLKLENGGLVRENLRLKAEVDNRSPQKFGRFAVAALQSKVEQYERETNRLKKALERSDKYIEELESQVAQLKNSSEEKEAMNSICQTALSADGKGSKGSEEDVVSKNQGDSARKQPGSSTSSSSHLAKPSSSRLCDTSSARQESTSKADLNCSKNKDLYQEQVEVMLDVTDTSMDTYLEREWGNKPSDCVPYKDEELYDLPAPCTPLSLSCLQLSTPENRESSVVQAGGSKKHSNHLRKLVFDDFCDSSNVSNKDSSEDDISRSENEKKSECFSSPKTGFWDCCSTSYAQNLDFESSEGNTIANSVGEISSKLSEKSGLCLSKRLNSIRSFEMNRTRTSSEASMDAAYLDKISELDSMMSESDNSKSPCNNGFKSLDLDGLSKSSQGSEFLEEPDKLEEKTELNLSKGSLTNDQLENGSEWKPTSFFLLSPSDQEMNEDFSLHSSSCPVTNEIKPPSCLFQTEFSQGILLSSSHRLFEDQRFGSSLFKMSSEMHSLHNHLQSPWSTSFVPEKRNKNVNQSTKRKIQSSLSSASPSKATKS.

The RING-type; degenerate zinc finger occupies 18–56 (CHICLGKVRQPVICINNHVFCSICIDLWLKNNSQCPACR). Coiled-coil stretches lie at residues 87 to 129 (LRKT…TILD) and 155 to 270 (ETVA…MNSI). Ser-210 carries the phosphoserine modification. Disordered stretches follow at residues 276–334 (SADG…TSKA) and 436–460 (NVSNKDSSEDDISRSENEKKSECFS). Positions 280–290 (KGSKGSEEDVV) are enriched in basic and acidic residues. Positions 304–318 (SSTSSSSHLAKPSSS) are enriched in low complexity. A compositionally biased stretch (polar residues) spans 319-334 (RLCDTSSARQESTSKA). Residues 446-457 (DISRSENEKKSE) show a composition bias toward basic and acidic residues. Phosphoserine is present on residues Ser-526, Ser-553, Ser-561, Ser-568, and Ser-570. 2 disordered regions span residues 570–602 (SSQGSEFLEEPDKLEEKTELNLSKGSLTNDQLE) and 687–726 (QSPWSTSFVPEKRNKNVNQSTKRKIQSSLSSASPSKATKS). The span at 579–588 (EPDKLEEKTE) shows a compositional bias: basic and acidic residues. A compositionally biased stretch (polar residues) spans 589 to 602 (LNLSKGSLTNDQLE). The span at 713–726 (SSLSSASPSKATKS) shows a compositional bias: low complexity. Phosphoserine occurs at positions 719 and 721.

As to quaternary structure, associates with ORC complex. Binds to chromatin; association is cell cycle-regulated, absent from mitotic chromosomes, is associated with chromatin from G1 and partially released from chromatin from mid S-phase. In terms of processing, auto-ubiquitinated.

Its subcellular location is the chromosome. It catalyses the reaction S-ubiquitinyl-[E2 ubiquitin-conjugating enzyme]-L-cysteine + [acceptor protein]-L-lysine = [E2 ubiquitin-conjugating enzyme]-L-cysteine + N(6)-ubiquitinyl-[acceptor protein]-L-lysine.. Its function is as follows. E3 ubiquitin ligase essential for DNA replication origin activation during S phase. Acts as a replication origin selector which selects the origins to be fired and catalyzes the multi-mono-ubiquitination of a subset of chromatin-bound ORC3 and ORC5 during S-phase. This Homo sapiens (Human) protein is ORC ubiquitin ligase 1.